A 60-amino-acid polypeptide reads, in one-letter code: Large ribosomal subunit protein bL32 (60 aa).

This sequence belongs to the bacterial ribosomal protein bL32 family.

This Petrotoga mobilis (strain DSM 10674 / SJ95) protein is Large ribosomal subunit protein bL32.